A 367-amino-acid chain; its full sequence is MEANGLGPQGFPELKNDTFLRAAWGEETDYTPVWCMRQAGRYLPEFRETRAAQDFFSTCRSPEACCEPTLQPLRRFPLDAAIIFSDILVVPQALGMEVTMVPGKGPSFPEPLREEQDLECLRDPEVVASELDYVFQAITLTRQRLAGRVPLIGFAGAPWTLMTYMVEGGGSSTMAQAKRWLYQRPQASHQLLRILTDALVPYLVGQVAAGAQALQLFESHAGHLGPQLFSKFALPYIRDVAKQVKARLREAGLAPVPMIIFAKDGHFALEELAQAGYEVVGLDWTVAPKKARECVGKTVTLQGNLDPCALYASEEEIGQLVKQMLDDFGPHRYIANLGHGLYPDMDPEHVGAFVDAVHKHSRLLRQN.

Residue methionine 1 is modified to N-acetylmethionine. The coproporphyrinogen I site is built by arginine 37, alanine 39, arginine 41, arginine 50, aspartate 86, tyrosine 164, serine 219, and histidine 339. Arginine 37, alanine 39, and arginine 41 together coordinate coproporphyrinogen III. Coproporphyrinogen III-binding residues include aspartate 86, tyrosine 164, serine 219, and histidine 339.

It belongs to the uroporphyrinogen decarboxylase family. In terms of assembly, homodimer.

The protein resides in the cytoplasm. It localises to the cytosol. The catalysed reaction is uroporphyrinogen III + 4 H(+) = coproporphyrinogen III + 4 CO2. It carries out the reaction uroporphyrinogen I + 4 H(+) = coproporphyrinogen I + 4 CO2. Its pathway is porphyrin-containing compound metabolism; protoporphyrin-IX biosynthesis; coproporphyrinogen-III from 5-aminolevulinate: step 4/4. Functionally, catalyzes the sequential decarboxylation of the four acetate side chains of uroporphyrinogen to form coproporphyrinogen and participates in the fifth step in the heme biosynthetic pathway. Isomer I or isomer III of uroporphyrinogen may serve as substrate, but only coproporphyrinogen III can ultimately be converted to heme. In vitro also decarboxylates pentacarboxylate porphyrinogen I. This is Uroporphyrinogen decarboxylase from Pongo abelii (Sumatran orangutan).